A 497-amino-acid chain; its full sequence is Early growth response protein 1-A (497 aa).

Positions 139 to 165 (SPSSAPSSSPSSSSSSSSSQSPPLSCS) are enriched in low complexity. 3 disordered regions span residues 139–169 (SPSS…VQSN), 175–194 (YSAA…DHSP), and 286–309 (PSRM…YGCP). C2H2-type zinc fingers lie at residues 306 to 330 (YGCP…IRIH), 336 to 358 (FQCR…IRTH), and 364 to 386 (FACD…TKIH). A disordered region spans residues 377-441 (DERKRHTKIH…SYPSPVHSSF (65 aa)). Basic residues predominate over residues 381–391 (RHTKIHLRQKD). Residues 397-441 (ATPVSVASPVSSYSPSASTSYPSPVPTSYSSPVSSSYPSPVHSSF) are compositionally biased toward low complexity.

Belongs to the EGR C2H2-type zinc-finger protein family. Expressed in the presumptive mesoderm. In blastula embryos, expressed in the dorsal marginal zone, and at the onset of gastrulation expression is specific to the Spemann organizer. As gastrulation proceeds, expressed in a ring around the yolk plug. This expression is maintained in advanced gastrulae, with weak expression also extending into the dorsal midline. By the neurula stage, expression is excluded from the notochord. In late tailbud stages, expressed in two spots in the anterior forebrain, which are connected via a bridge of cells that also show expression.

The protein resides in the nucleus. The protein localises to the cytoplasm. Transcriptional regulator. Recognizes and binds to the DNA sequence 5'-GCG(T/G)GGGCG-3'(EGR-site) in the promoter region of target genes. Binds double-stranded target DNA, irrespective of the cytosine methylation status. Regulates the transcription of numerous target genes, and thereby plays an important role in regulating the response to growth factors, DNA damage, and ischemia. Plays a role in the regulation of cell survival, proliferation and cell death. Mediates responses to ischemia and hypoxia; regulates the expression of proteins that are involved in inflammatory processes. Plays a role in regulating the expression of circadian clock genes. This chain is Early growth response protein 1-A (egr1-a), found in Xenopus laevis (African clawed frog).